A 327-amino-acid chain; its full sequence is Phenylalanine--tRNA ligase alpha subunit (327 aa).

Position 252 (Glu-252) interacts with Mg(2+).

It belongs to the class-II aminoacyl-tRNA synthetase family. Phe-tRNA synthetase alpha subunit type 1 subfamily. In terms of assembly, tetramer of two alpha and two beta subunits. It depends on Mg(2+) as a cofactor.

Its subcellular location is the cytoplasm. The enzyme catalyses tRNA(Phe) + L-phenylalanine + ATP = L-phenylalanyl-tRNA(Phe) + AMP + diphosphate + H(+). This is Phenylalanine--tRNA ligase alpha subunit from Salmonella newport (strain SL254).